Consider the following 179-residue polypeptide: Adenine phosphoribosyltransferase (179 aa).

Belongs to the purine/pyrimidine phosphoribosyltransferase family. Homodimer.

The protein localises to the cytoplasm. The catalysed reaction is AMP + diphosphate = 5-phospho-alpha-D-ribose 1-diphosphate + adenine. It participates in purine metabolism; AMP biosynthesis via salvage pathway; AMP from adenine: step 1/1. In terms of biological role, catalyzes a salvage reaction resulting in the formation of AMP, that is energically less costly than de novo synthesis. In Bradyrhizobium sp. (strain BTAi1 / ATCC BAA-1182), this protein is Adenine phosphoribosyltransferase.